A 385-amino-acid chain; its full sequence is Guanine nucleotide-binding protein alpha-5 subunit (385 aa).

The N-myristoyl glycine moiety is linked to residue G2. C6 is lipidated: S-palmitoyl cysteine. The region spanning 32-385 is the G-alpha domain; the sequence is RKIKMLLLGV…GKNYEDTNLE (354 aa). The G1 motif stretch occupies residues 35 to 48; that stretch reads KMLLLGVTDSGKST. GTP contacts are provided by residues 40 to 47, 174 to 180, 199 to 203, 298 to 301, and A357; these read GVTDSGKS, IHMRQTT, DVGGQ, and NKKD. 2 residues coordinate Mg(2+): S47 and T180. Positions 172 to 180 are G2 motif; the sequence is DLIHMRQTT. The tract at residues 195 to 204 is G3 motif; it reads IRLIDVGGQK. Positions 294 to 301 are G4 motif; it reads MLFLNKKD. A G5 motif region spans residues 355–360; it reads TQATVT.

It belongs to the G-alpha family. G proteins are composed of 3 units; alpha, beta and gamma. The alpha chain contains the guanine nucleotide binding site.

Functionally, guanine nucleotide-binding proteins (G proteins) are involved as modulators or transducers in various transmembrane signaling systems. The chain is Guanine nucleotide-binding protein alpha-5 subunit (gpa-5) from Caenorhabditis elegans.